Here is a 270-residue protein sequence, read N- to C-terminus: tRNA pseudouridine synthase A (270 aa).

Asp-52 acts as the Nucleophile in catalysis. Tyr-110 contributes to the substrate binding site.

Belongs to the tRNA pseudouridine synthase TruA family. In terms of assembly, homodimer.

The catalysed reaction is uridine(38/39/40) in tRNA = pseudouridine(38/39/40) in tRNA. Functionally, formation of pseudouridine at positions 38, 39 and 40 in the anticodon stem and loop of transfer RNAs. The sequence is that of tRNA pseudouridine synthase A from Roseiflexus castenholzii (strain DSM 13941 / HLO8).